Here is a 140-residue protein sequence, read N- to C-terminus: ATP synthase epsilon chain (140 aa).

Belongs to the ATPase epsilon chain family. As to quaternary structure, F-type ATPases have 2 components, CF(1) - the catalytic core - and CF(0) - the membrane proton channel. CF(1) has five subunits: alpha(3), beta(3), gamma(1), delta(1), epsilon(1). CF(0) has three main subunits: a, b and c.

It is found in the cell membrane. In terms of biological role, produces ATP from ADP in the presence of a proton gradient across the membrane. The polypeptide is ATP synthase epsilon chain (Dehalococcoides mccartyi (strain ATCC BAA-2100 / JCM 16839 / KCTC 5957 / BAV1)).